We begin with the raw amino-acid sequence, 330 residues long: Malate dehydrogenase (330 aa).

Position 13–19 (Gly13–Gly19) interacts with NAD(+). Substrate contacts are provided by Arg94 and Arg100. Residues Asn107, Gln114, and Val131–Asn133 contribute to the NAD(+) site. Substrate contacts are provided by Asn133 and Arg164. His189 serves as the catalytic Proton acceptor.

The protein belongs to the LDH/MDH superfamily. MDH type 2 family.

The catalysed reaction is (S)-malate + NAD(+) = oxaloacetate + NADH + H(+). Functionally, catalyzes the reversible oxidation of malate to oxaloacetate. This Deinococcus deserti (strain DSM 17065 / CIP 109153 / LMG 22923 / VCD115) protein is Malate dehydrogenase.